The sequence spans 551 residues: Rqc2 homolog RqcH (551 aa).

The interval 363 to 551 (YQKLKEAVKY…SKKIASMKKS (189 aa)) is required for fibronectin binding.

Belongs to the NEMF family. In terms of assembly, associates with stalled 50S ribosomal subunits, binds to RqcP. Interacts with human fibronectin.

The protein resides in the cell surface. The protein localises to the cytoplasm. In terms of biological role, key component of the ribosome quality control system (RQC), a ribosome-associated complex that mediates the extraction of incompletely synthesized nascent chains from stalled ribosomes and their subsequent degradation. RqcH recruits Ala-charged tRNA, and with RqcP directs the elongation of stalled nascent chains on 50S ribosomal subunits, leading to non-templated C-terminal alanine extensions (Ala tail). The Ala tail promotes nascent chain degradation. May add between 1 and at least 8 Ala residues. Binds to stalled 50S ribosomal subunits. Functionally, recombinant protein binds to immobilized human fibronectin; binding is saturable and competed by heparin. Recombinant protein inhibits binding of whole cells to fibronectin. This chain is Rqc2 homolog RqcH, found in Streptococcus pneumoniae (strain ATCC BAA-255 / R6).